The sequence spans 247 residues: Ubiquinone biosynthesis O-methyltransferase (247 aa).

The S-adenosyl-L-methionine site is built by Arg-39, Gly-70, Asp-91, and Met-134.

Belongs to the methyltransferase superfamily. UbiG/COQ3 family.

The catalysed reaction is a 3-demethylubiquinol + S-adenosyl-L-methionine = a ubiquinol + S-adenosyl-L-homocysteine + H(+). The enzyme catalyses a 3-(all-trans-polyprenyl)benzene-1,2-diol + S-adenosyl-L-methionine = a 2-methoxy-6-(all-trans-polyprenyl)phenol + S-adenosyl-L-homocysteine + H(+). It functions in the pathway cofactor biosynthesis; ubiquinone biosynthesis. O-methyltransferase that catalyzes the 2 O-methylation steps in the ubiquinone biosynthetic pathway. The sequence is that of Ubiquinone biosynthesis O-methyltransferase from Cereibacter sphaeroides (strain KD131 / KCTC 12085) (Rhodobacter sphaeroides).